We begin with the raw amino-acid sequence, 461 residues long: SWM histone demethylase complex subunit phf1 (461 aa).

Residues 79-130 (PYGGMTMPASSSSGATSVPPEQDPSLSVSFNRLPKSASTKTKNGRIRSSRRE) are disordered. The span at 102–119 (PSLSVSFNRLPKSASTKT) shows a compositional bias: polar residues. A PHD-type zinc finger spans residues 190-246 (VTLCSVCQRGHSPLSNRIVFCDGCNSPYHQLCHHPPIDDATVQDVDAEWFCMKCQYR).

In terms of assembly, component of the SWM histone demethylase complex composed of at least lsd1, lsd2, phf1 and phf2.

It localises to the nucleus. Its function is as follows. Component of the SWM histone demethylase complex that specifically demethylates H3K9me2, a specific tag for epigenetic transcriptional activation, thereby acting as a corepressor. Has a role in regulating heterochromatin propagation and euchromatic transcription. The protein is SWM histone demethylase complex subunit phf1 (phf1) of Schizosaccharomyces pombe (strain 972 / ATCC 24843) (Fission yeast).